The sequence spans 249 residues: Coproheme decarboxylase (249 aa).

Fe-coproporphyrin III is bound by residues Arg131, Tyr145–Lys149, His172, Gln185, and Ser223. The active site involves Tyr145.

This sequence belongs to the ChdC family. Type 1 subfamily. It depends on Fe-coproporphyrin III as a cofactor.

It carries out the reaction Fe-coproporphyrin III + 2 H2O2 + 2 H(+) = heme b + 2 CO2 + 4 H2O. The catalysed reaction is Fe-coproporphyrin III + H2O2 + H(+) = harderoheme III + CO2 + 2 H2O. It catalyses the reaction harderoheme III + H2O2 + H(+) = heme b + CO2 + 2 H2O. It functions in the pathway porphyrin-containing compound metabolism; protoheme biosynthesis. Its function is as follows. Involved in coproporphyrin-dependent heme b biosynthesis. Catalyzes the decarboxylation of Fe-coproporphyrin III (coproheme) to heme b (protoheme IX), the last step of the pathway. The reaction occurs in a stepwise manner with a three-propionate intermediate. In Shouchella clausii (strain KSM-K16) (Alkalihalobacillus clausii), this protein is Coproheme decarboxylase.